The sequence spans 364 residues: Protein FAM81A (364 aa).

Residues 80-107 adopt a coiled-coil conformation; sequence IRNITAIVKQLNRDIEVLQEQIRARDNI. A compositionally biased stretch (basic and acidic residues) spans 275 to 300; sequence ARLDKIEESQRRNAEGQRKPEEEKVH. The interval 275-301 is disordered; that stretch reads ARLDKIEESQRRNAEGQRKPEEEKVHG.

This sequence belongs to the FAM81 family. In terms of assembly, interacts with DLG4/PSD-95, GRIN2B/GLUN2B and SYNGAP1; the interactions facilitate condensate formation. Highly expressed in brain (at protein level).

The protein localises to the postsynaptic density. It is found in the cytoplasm. In terms of biological role, facilitates the interaction and assembly of proteins within the postsynaptic density by promoting the condensation of postsynaptic proteins via liquid-liquid phase separation. Required for neuronal activity. Accumulation at the postsynaptic density results in enlargement of dendritic spines. The chain is Protein FAM81A from Rattus norvegicus (Rat).